The primary structure comprises 160 residues: Large ribosomal subunit protein eL21 (160 aa).

Basic and acidic residues-rich tracts occupy residues 112–123 and 136–145; these read NDQKKKEAKEKG and REAHFVRTNG. A disordered region spans residues 112–145; it reads NDQKKKEAKEKGTWVQLKRQPAPPREAHFVRTNG.

This sequence belongs to the eukaryotic ribosomal protein eL21 family. In terms of assembly, component of the large ribosomal subunit.

The protein resides in the cytoplasm. It localises to the cytosol. The protein localises to the endoplasmic reticulum. Component of the large ribosomal subunit. The ribosome is a large ribonucleoprotein complex responsible for the synthesis of proteins in the cell. In Capra hircus (Goat), this protein is Large ribosomal subunit protein eL21 (RPL21).